The chain runs to 715 residues: Polyribonucleotide nucleotidyltransferase (715 aa).

Residues D485 and D491 each contribute to the Mg(2+) site. One can recognise a KH domain in the interval 552 to 611 (PRIHTMKIDPKKIKDVIGKGGAVIRALTEETGTSIDIDDDGTVKIAATDNNAAKAVMARI). The S1 motif domain occupies 621–689 (NAIYKGKVTR…RQNRIRLTMK (69 aa)). Residues 695–715 (TPVAENVTEEAEVSSEQQAEI) are disordered.

This sequence belongs to the polyribonucleotide nucleotidyltransferase family. As to quaternary structure, component of the RNA degradosome, which is a multiprotein complex involved in RNA processing and mRNA degradation. Requires Mg(2+) as cofactor.

It is found in the cytoplasm. It carries out the reaction RNA(n+1) + phosphate = RNA(n) + a ribonucleoside 5'-diphosphate. In terms of biological role, involved in mRNA degradation. Catalyzes the phosphorolysis of single-stranded polyribonucleotides processively in the 3'- to 5'-direction. This is Polyribonucleotide nucleotidyltransferase from Actinobacillus pleuropneumoniae serotype 3 (strain JL03).